Reading from the N-terminus, the 515-residue chain is Putative BTB/POZ domain-containing protein At3g49970 (515 aa).

Residues 1–63 form the BTB domain; the sequence is MLEKLSFLLH…CYDISFEINT (63 aa). In terms of domain architecture, NPH3 spans 149 to 409; that stretch reads DWWADDLAVL…NSDSPAPATA (261 aa). Tyr-350 carries the phosphotyrosine modification. The tract at residues 395 to 417 is disordered; sequence QENLSNSDSPAPATAEKTLSPPE. Residues 418 to 452 are a coiled coil; that stretch reads LSSYKNELSKLNRENQYLKLELLKVKMKFKELEKE. A disordered region spans residues 494 to 515; the sequence is INPFGLKQGQTKQPKSRRHSIS.

It belongs to the NPH3 family.

It functions in the pathway protein modification; protein ubiquitination. Functionally, may act as a substrate-specific adapter of an E3 ubiquitin-protein ligase complex (CUL3-RBX1-BTB) which mediates the ubiquitination and subsequent proteasomal degradation of target proteins. The sequence is that of Putative BTB/POZ domain-containing protein At3g49970 from Arabidopsis thaliana (Mouse-ear cress).